We begin with the raw amino-acid sequence, 118 residues long: NADH-ubiquinone oxidoreductase chain 3 (118 aa).

The next 3 helical transmembrane spans lie at 9 to 29 (IYLVISLLVSLILLGVPFLFA), 62 to 82 (LVSILFIIFDLEVTFFFPWAV), and 87 to 107 (IDLFGFWSMMAFLLILFIGSL).

This sequence belongs to the complex I subunit 3 family.

The protein resides in the mitochondrion membrane. The catalysed reaction is a ubiquinone + NADH + 5 H(+)(in) = a ubiquinol + NAD(+) + 4 H(+)(out). Functionally, core subunit of the mitochondrial membrane respiratory chain NADH dehydrogenase (Complex I) that is believed to belong to the minimal assembly required for catalysis. Complex I functions in the transfer of electrons from NADH to the respiratory chain. The immediate electron acceptor for the enzyme is believed to be ubiquinone. This is NADH-ubiquinone oxidoreductase chain 3 (ND3) from Zea mays (Maize).